A 343-amino-acid chain; its full sequence is Sodium/bile acid cotransporter 7-B (343 aa).

The Cytoplasmic portion of the chain corresponds to 1–9 (MGLLERLRK). The chain crosses the membrane as a helical span at residues 10 to 30 (EWFIIGIILVIVAAKLEPTIG). Residues 31 to 37 (EKGGPLK) lie on the Extracellular side of the membrane. A helical transmembrane segment spans residues 38–58 (PEITITYIAVSAIFFNSGLSL). Residues 59-71 (KTEELTNALMHVK) lie on the Cytoplasmic side of the membrane. Residues 72–92 (LHLFVQLFTLVFFPTAIWIFL) traverse the membrane as a helical segment. Topologically, residues 93–116 (QVLSLTPINEWLLKGLQTVSCMPP) are extracellular. A helical membrane pass occupies residues 117–137 (PVSSAVILTKAVGGNEAAAIF). Asparagine 138 is a topological domain (cytoplasmic). Residues 139–159 (SAFGSFLGIVVTPLLLLLFLG) traverse the membrane as a helical segment. The Extracellular portion of the chain corresponds to 160-163 (SSSS). Residues 164–184 (VPFTSIFSQLFMTVVVPLIIG) form a helical membrane-spanning segment. Over 185–201 (QIVRRYIKDWLERKKPP) the chain is Cytoplasmic. The helical transmembrane segment at 202–222 (FGAISSCVLLMIIYTTFCDTF) threads the bilayer. The Extracellular portion of the chain corresponds to 223-234 (SNPNIDLDTFSL). Residues 235 to 255 (VVIVFIIFFIQLAFMLLTFLF) traverse the membrane as a helical segment. At 256-270 (STSKNSGFTPADTVA) the chain is on the cytoplasmic side. The chain crosses the membrane as a helical span at residues 271–291 (IVFCSTHKSLTLGIPMLKIVF). The Extracellular segment spans residues 292-298 (AGYEHLS). Residues 299 to 319 (LISVPLLIYHPAQILLGSVLV) form a helical membrane-spanning segment. Over 320 to 343 (PTIKSWMLSRRKALKLTRQPKIPL) the chain is Cytoplasmic.

It belongs to the bile acid:sodium symporter (BASS) (TC 2.A.28) family.

It localises to the cell membrane. The protein resides in the endoplasmic reticulum membrane. It is found in the golgi apparatus membrane. Involved in teeth and skeletal development. Has an essential role in the biosynthesis and trafficking of glycosaminoglycans and glycoproteins to produce a proper functioning extracellular matrix. Required for extracellular matrix mineralization. Also involved in the regulation of cellular calcium homeostasis. Does not show transport activity towards bile acids or steroid sulfates. In Xenopus laevis (African clawed frog), this protein is Sodium/bile acid cotransporter 7-B (slc10a7-b).